A 242-amino-acid chain; its full sequence is Small ribosomal subunit protein uS2 (242 aa).

Belongs to the universal ribosomal protein uS2 family.

This chain is Small ribosomal subunit protein uS2, found in Shewanella woodyi (strain ATCC 51908 / MS32).